A 192-amino-acid polypeptide reads, in one-letter code: Flagellar transcriptional regulator FlhC (192 aa).

Residues C137, C140, C157, and C160 each coordinate Zn(2+).

The protein belongs to the FlhC family. As to quaternary structure, heterohexamer composed of two FlhC and four FlhD subunits. Each FlhC binds a FlhD dimer, forming a heterotrimer, and a hexamer assembles by dimerization of two heterotrimers. Zn(2+) serves as cofactor.

The protein resides in the cytoplasm. Functionally, functions in complex with FlhD as a master transcriptional regulator that regulates transcription of several flagellar and non-flagellar operons by binding to their promoter region. Activates expression of class 2 flagellar genes, including fliA, which is a flagellum-specific sigma factor that turns on the class 3 genes. Also regulates genes whose products function in a variety of physiological pathways. This Escherichia coli O6:H1 (strain CFT073 / ATCC 700928 / UPEC) protein is Flagellar transcriptional regulator FlhC.